We begin with the raw amino-acid sequence, 529 residues long: HTH-type transcriptional activator Btr (529 aa).

The segment at residues 182–201 (LAQLSQMAGISAKHYSESFK) is a DNA-binding region (H-T-H motif). A Fe/B12 periplasmic-binding domain is found at 268-528 (KIAAYGRGTM…QTVSLLSGDC (261 aa)).

As to quaternary structure, binds with high affinity to both apo-bacillibactin and iron-bacillibactin.

The protein resides in the cytoplasm. Functionally, in iron-limited conditions, activates expression of the feuABCybbA operon, which encodes the bacillibactin uptake system. Acts by binding directly to a conserved direct repeat element upstream of the feuA promoter. Activity is increased in the presence of bacillibactin. The protein is HTH-type transcriptional activator Btr (btr) of Bacillus subtilis (strain 168).